The primary structure comprises 358 residues: UDP-N-acetylglucosamine--N-acetylmuramyl-(pentapeptide) pyrophosphoryl-undecaprenol N-acetylglucosamine transferase (358 aa).

Residues 11 to 13 (TGG), N124, R164, S195, and Q291 contribute to the UDP-N-acetyl-alpha-D-glucosamine site.

It belongs to the glycosyltransferase 28 family. MurG subfamily.

It localises to the cell inner membrane. It catalyses the reaction di-trans,octa-cis-undecaprenyl diphospho-N-acetyl-alpha-D-muramoyl-L-alanyl-D-glutamyl-meso-2,6-diaminopimeloyl-D-alanyl-D-alanine + UDP-N-acetyl-alpha-D-glucosamine = di-trans,octa-cis-undecaprenyl diphospho-[N-acetyl-alpha-D-glucosaminyl-(1-&gt;4)]-N-acetyl-alpha-D-muramoyl-L-alanyl-D-glutamyl-meso-2,6-diaminopimeloyl-D-alanyl-D-alanine + UDP + H(+). The protein operates within cell wall biogenesis; peptidoglycan biosynthesis. In terms of biological role, cell wall formation. Catalyzes the transfer of a GlcNAc subunit on undecaprenyl-pyrophosphoryl-MurNAc-pentapeptide (lipid intermediate I) to form undecaprenyl-pyrophosphoryl-MurNAc-(pentapeptide)GlcNAc (lipid intermediate II). This chain is UDP-N-acetylglucosamine--N-acetylmuramyl-(pentapeptide) pyrophosphoryl-undecaprenol N-acetylglucosamine transferase, found in Leptospira borgpetersenii serovar Hardjo-bovis (strain JB197).